The sequence spans 85 residues: Toxin BmKa1 (85 aa).

Residues Met-1 to Ser-19 form the signal peptide. The LCN-type CS-alpha/beta domain occupies Arg-21–Asn-83. 4 disulfide bridges follow: Cys-31–Cys-82, Cys-35–Cys-55, Cys-41–Cys-65, and Cys-45–Cys-67.

This sequence belongs to the long (4 C-C) scorpion toxin superfamily. Sodium channel inhibitor family. Alpha subfamily. As to expression, expressed by the venom gland.

Its subcellular location is the secreted. Its function is as follows. Alpha toxins bind voltage-independently at site-3 of sodium channels (Nav) and inhibit the inactivation of the activated channels, thereby blocking neuronal transmission. The chain is Toxin BmKa1 from Olivierus martensii (Manchurian scorpion).